Reading from the N-terminus, the 269-residue chain is Malonyl-[acyl-carrier protein] O-methyltransferase (269 aa).

Belongs to the methyltransferase superfamily.

It catalyses the reaction malonyl-[ACP] + S-adenosyl-L-methionine = malonyl-[ACP] methyl ester + S-adenosyl-L-homocysteine. The protein operates within cofactor biosynthesis; biotin biosynthesis. Its function is as follows. Converts the free carboxyl group of a malonyl-thioester to its methyl ester by transfer of a methyl group from S-adenosyl-L-methionine (SAM). It allows to synthesize pimeloyl-ACP via the fatty acid synthetic pathway. The sequence is that of Malonyl-[acyl-carrier protein] O-methyltransferase from Bacillus cereus (strain ATCC 14579 / DSM 31 / CCUG 7414 / JCM 2152 / NBRC 15305 / NCIMB 9373 / NCTC 2599 / NRRL B-3711).